The sequence spans 511 residues: Synaptotagmin-6 (511 aa).

The Vesicular segment spans residues 1 to 59 (MSGVWGAGGPRCQAALAVLASLCRARPPPLGLDVETCRSFELQSPEQSPSAADSGTSVS). The interval 12 to 38 (CQAALAVLASLCRARPPPLGLDVETCR) is cysteine motif. A helical membrane pass occupies residues 60–80 (LLAVVVIVCGVALVAVFLFLF). Topologically, residues 81–511 (WKLCWMPWRK…KSFKEGTPRL (431 aa)) are cytoplasmic. Disordered regions lie at residues 92–119 (EASS…ADKL) and 157–182 (TKLQ…LPRQ). A compositionally biased stretch (low complexity) spans 94 to 103 (SSPSSANPAS). 2 stretches are compositionally biased toward polar residues: residues 104–113 (ETLQSPSSRG) and 160–172 (QRQT…STRH). Position 217 is a phosphoserine (serine 217). C2 domains are found at residues 230–351 (SCGK…SIWK) and 362–495 (DLGE…AHWH). Ca(2+) contacts are provided by aspartate 261, aspartate 267, aspartate 319, phenylalanine 320, aspartate 321, serine 324, aspartate 327, aspartate 393, aspartate 399, aspartate 453, and aspartate 455. Residues 483-511 (MLAYPRKPIAHWHSLVEVKKSFKEGTPRL) are necessary for cell membrane association (isoform 2).

The protein belongs to the synaptotagmin family. Isoform 1: Homodimer; disulfide-linked via the cysteine motif. Isoform 1: Can also form heterodimers with SYT3, SYT7, SYT9 and SYT10. Isoform 1: Interacts with STX1A, STX1B and STX2; the interaction is Ca(2+)-dependent. Isoform 2: Is not able to form homodimer and heterodimers. Requires Ca(2+) as cofactor. In terms of tissue distribution, isoform 1 is expressed in the olfactory bulb. Isoform 2 is expressed in the brain (at protein level).

It localises to the cytoplasmic vesicle. The protein resides in the secretory vesicle. Its subcellular location is the synaptic vesicle membrane. The protein localises to the membrane. It is found in the cytoplasm. It localises to the cytosol. The protein resides in the cell membrane. Its function is as follows. May be involved in Ca(2+)-dependent exocytosis of secretory vesicles through Ca(2+) and phospholipid binding to the C2 domain or may serve as Ca(2+) sensors in the process of vesicular trafficking and exocytosis. May mediate Ca(2+)-regulation of exocytosis in acrosomal reaction in sperm. This Mus musculus (Mouse) protein is Synaptotagmin-6 (Syt6).